Reading from the N-terminus, the 150-residue chain is Single-stranded DNA-binding protein rim1, mitochondrial (150 aa).

The N-terminal 22 residues, 1 to 22 (MLFLKSSRAFSKRLFSSSTVRY), are a transit peptide targeting the mitochondrion. In terms of domain architecture, SSB spans 25-125 (IQRLTLTGNL…HVSADVLFYP (101 aa)). The tract at residues 127-150 (NKNGDESGEETHPELDADPMINSF) is disordered. The span at 128–141 (KNGDESGEETHPEL) shows a compositional bias: basic and acidic residues.

Its subcellular location is the mitochondrion. Its function is as follows. This protein binds preferentially and cooperatively to ss-DNA. Involved in mitochondrial DNA replication. In Schizosaccharomyces pombe (strain 972 / ATCC 24843) (Fission yeast), this protein is Single-stranded DNA-binding protein rim1, mitochondrial (rim1).